Consider the following 982-residue polypeptide: E3 ubiquitin-protein ligase CBL-B (982 aa).

Low complexity predominate over residues 1–14 (MASSSSSSSSTNSS). Positions 1–25 (MASSSSSSSSTNSSAVTGRLPGARS) are disordered. The segment at 46-178 (PPKQAAADRR…KAIFPSGQFQ (133 aa)) is 4H. The region spanning 46-354 (PPKQAAADRR…GRSYNPDLTD (309 aa)) is the Cbl-PTB domain. Residues 179-251 (GDNFRITKAD…FEFDIFTRLF (73 aa)) are EF-hand-like. 5 residues coordinate Ca(2+): D232, T234, N236, Y238, and E243. Residues 252–354 (QPWTSILRNW…GRSYNPDLTD (103 aa)) form an SH2-like region. R297 is a 4-O-phospho-L-tyrosine binding site. The segment at 355–383 (LCEPTPHDHIKVTQEQYELYCEMGSTFQL) is linker. The segment at 384 to 423 (CKICAENDKDVKIEPCGHLMCTSCLTSWQESDGQGCPFCR) adopts an RING-type zinc-finger fold. 3 disordered regions span residues 480 to 582 (MNER…RTCR), 709 to 728 (VRNS…SHPV), and 766 to 911 (LKQP…PVPR). Over residues 483 to 497 (RQNSPVTSPGSSPLS) the composition is skewed to polar residues. A compositionally biased stretch (pro residues) spans 554 to 576 (LPAPPPPLREPPPPPERPPPIPP). A compositionally biased stretch (pro residues) spans 825–834 (PSQPPPPPPA). In terms of domain architecture, UBA spans 927 to 970 (SLAENVDAKIAKLMGEGFPFEEVKRALEIAQNNVDVARSILREF).

Interacts with several SH3 domain-containing proteins and with poly-ubiquitinated proteins.

It is found in the cytoplasm. It catalyses the reaction S-ubiquitinyl-[E2 ubiquitin-conjugating enzyme]-L-cysteine + [acceptor protein]-L-lysine = [E2 ubiquitin-conjugating enzyme]-L-cysteine + N(6)-ubiquitinyl-[acceptor protein]-L-lysine.. It functions in the pathway protein modification; protein ubiquitination. Its function is as follows. E3 ubiquitin-protein ligase which accepts ubiquitin from specific E2 ubiquitin-conjugating enzymes, and transfers it to substrates, generally promoting their degradation by the proteasome. This is E3 ubiquitin-protein ligase CBL-B (cblb) from Xenopus tropicalis (Western clawed frog).